A 29-amino-acid chain; its full sequence is Pyridoxal 5'-phosphate synthase subunit PdxS (29 aa).

It belongs to the PdxS/SNZ family. As to quaternary structure, in the presence of PdxT, forms a dodecamer of heterodimers.

The catalysed reaction is aldehydo-D-ribose 5-phosphate + D-glyceraldehyde 3-phosphate + L-glutamine = pyridoxal 5'-phosphate + L-glutamate + phosphate + 3 H2O + H(+). The protein operates within cofactor biosynthesis; pyridoxal 5'-phosphate biosynthesis. Its function is as follows. Catalyzes the formation of pyridoxal 5'-phosphate from ribose 5-phosphate (RBP), glyceraldehyde 3-phosphate (G3P) and ammonia. The ammonia is provided by the PdxT subunit. Can also use ribulose 5-phosphate and dihydroxyacetone phosphate as substrates, resulting from enzyme-catalyzed isomerization of RBP and G3P, respectively. In Clostridium pasteurianum, this protein is Pyridoxal 5'-phosphate synthase subunit PdxS.